The chain runs to 245 residues: Glucan endo-1,3-beta-glucosidase (245 aa).

A signal peptide spans 1–23 (MMKTLVVVLSLSLTILSFGGAHA). 8 cysteine pairs are disulfide-bonded: Cys32–Cys244, Cys80–Cys90, Cys95–Cys102, Cys150–Cys233, Cys155–Cys216, Cys163–Cys179, Cys183–Cys192, and Cys193–Cys203.

This sequence belongs to the thaumatin family. In terms of tissue distribution, abundantly expressed in ripening fruit.

It is found in the secreted. The catalysed reaction is Hydrolysis of (1-&gt;3)-beta-D-glucosidic linkages in (1-&gt;3)-beta-D-glucans.. The sequence is that of Glucan endo-1,3-beta-glucosidase from Prunus avium (Cherry).